Reading from the N-terminus, the 289-residue chain is Rhodopsin (289 aa).

Residues 1–7 (YLVSPAA) are Extracellular-facing. A helical transmembrane segment spans residues 8-32 (YAALGAYMFLLILIGFPVNFLTLYV). Over 33–44 (TLEHKKLRTPLN) the chain is Cytoplasmic. The helical transmembrane segment at 45-67 (YILLNLAVADLFMVLGGFTTTMY) threads the bilayer. At 68 to 81 (TSMHGYFVLGRLGC) the chain is on the extracellular side. C81 and C158 form a disulfide bridge. A helical membrane pass occupies residues 82–104 (NLEGFFATLGGEIALWSLVVLAI). Positions 105–107 (ERW) match the 'Ionic lock' involved in activated form stabilization motif. Topologically, residues 105 to 123 (ERWIVVCKPISNFRFTEDN) are cytoplasmic. Residues 124-144 (AIMGLAFSWVMALTCAVPPLV) traverse the membrane as a helical segment. The Extracellular portion of the chain corresponds to 145-173 (GWSRYIPEGMQCSCGVDYYTRAEGFNNES). N171 carries an N-linked (GlcNAc...) asparagine glycan. A helical membrane pass occupies residues 174–195 (FVIYMFIVHFPIPLSVIFFCYG). The Cytoplasmic segment spans residues 196 to 223 (RLLCAVKEAAAAQQESETTQRAEKEVSR). Residues 224–245 (MVVILVIGFLVCWLPYASVAWW) traverse the membrane as a helical segment. The Extracellular portion of the chain corresponds to 246–257 (IFCNQGSDFGPI). Residues 258–279 (FMTLPSFFAKRPAIYNPMIYIC) traverse the membrane as a helical segment. The residue at position 267 (K267) is an N6-(retinylidene)lysine. Topologically, residues 280 to 289 (MNKQFRHCMI) are cytoplasmic.

The protein belongs to the G-protein coupled receptor 1 family. Opsin subfamily. In terms of processing, phosphorylated on some or all of the serine and threonine residues present in the C-terminal region. Contains one covalently linked retinal chromophore.

The protein resides in the membrane. Its subcellular location is the cell projection. The protein localises to the cilium. It localises to the photoreceptor outer segment. Its function is as follows. Photoreceptor required for image-forming vision at low light intensity. While most salt water fish species use retinal as chromophore, most freshwater fish use 3-dehydroretinal, or a mixture of retinal and 3-dehydroretinal. Light-induced isomerization of 11-cis to all-trans retinal triggers a conformational change that activates signaling via G-proteins. Subsequent receptor phosphorylation mediates displacement of the bound G-protein alpha subunit by arrestin and terminates signaling. The sequence is that of Rhodopsin (rho) from Batrachocottus multiradiatus (Baikal sculpin).